The following is a 444-amino-acid chain: Glutamate-1-semialdehyde 2,1-aminomutase (444 aa).

At K267 the chain carries N6-(pyridoxal phosphate)lysine.

It belongs to the class-III pyridoxal-phosphate-dependent aminotransferase family. HemL subfamily. In terms of assembly, homodimer. It depends on pyridoxal 5'-phosphate as a cofactor.

The protein localises to the cytoplasm. It catalyses the reaction (S)-4-amino-5-oxopentanoate = 5-aminolevulinate. It participates in porphyrin-containing compound metabolism; protoporphyrin-IX biosynthesis; 5-aminolevulinate from L-glutamyl-tRNA(Glu): step 2/2. This chain is Glutamate-1-semialdehyde 2,1-aminomutase, found in Xylella fastidiosa (strain 9a5c).